We begin with the raw amino-acid sequence, 172 residues long: 3-phenylpropionate/cinnamic acid dioxygenase subunit beta (172 aa).

The protein belongs to the bacterial ring-hydroxylating dioxygenase beta subunit family. As to quaternary structure, this dioxygenase system consists of four proteins: the two subunits of the hydroxylase component (HcaE and HcaF), a ferredoxin (HcaC) and a ferredoxin reductase (HcaD).

The enzyme catalyses 3-phenylpropanoate + NADH + O2 + H(+) = 3-(cis-5,6-dihydroxycyclohexa-1,3-dien-1-yl)propanoate + NAD(+). It carries out the reaction (E)-cinnamate + NADH + O2 + H(+) = (2E)-3-(cis-5,6-dihydroxycyclohexa-1,3-dien-1-yl)prop-2-enoate + NAD(+). It functions in the pathway aromatic compound metabolism; 3-phenylpropanoate degradation. In terms of biological role, part of the multicomponent 3-phenylpropionate dioxygenase. Converts 3-phenylpropionic acid (PP) and cinnamic acid (CI) into 3-phenylpropionate-dihydrodiol (PP-dihydrodiol) and cinnamic acid-dihydrodiol (CI-dihydrodiol), respectively. In Shigella flexneri serotype 5b (strain 8401), this protein is 3-phenylpropionate/cinnamic acid dioxygenase subunit beta.